Consider the following 315-residue polypeptide: Ribosomal RNA small subunit methyltransferase H (315 aa).

S-adenosyl-L-methionine-binding positions include 61–63 (GGH), Asp-80, Phe-108, Asp-124, and Gln-131. The segment at 291 to 315 (PQPEEEEKNPRSRSAKLRFAQRKPL) is disordered. Basic residues predominate over residues 301-315 (RSRSAKLRFAQRKPL).

It belongs to the methyltransferase superfamily. RsmH family.

It is found in the cytoplasm. The catalysed reaction is cytidine(1402) in 16S rRNA + S-adenosyl-L-methionine = N(4)-methylcytidine(1402) in 16S rRNA + S-adenosyl-L-homocysteine + H(+). Its function is as follows. Specifically methylates the N4 position of cytidine in position 1402 (C1402) of 16S rRNA. This Crocosphaera subtropica (strain ATCC 51142 / BH68) (Cyanothece sp. (strain ATCC 51142)) protein is Ribosomal RNA small subunit methyltransferase H.